We begin with the raw amino-acid sequence, 188 residues long: UPF0461 protein C5orf24 homolog (188 aa).

Position 37 is a phosphoserine (Ser-37). Lys-75 is covalently cross-linked (Glycyl lysine isopeptide (Lys-Gly) (interchain with G-Cter in SUMO2)). Over residues 80-92 (KKKNLNRSGKRGR) the composition is skewed to basic residues. A disordered region spans residues 80-141 (KKKNLNRSGK…AGYKVSPGRP (62 aa)). Polar residues predominate over residues 94–107 (SGTTKSAGYRTSTG). A phosphoserine mark is found at Ser-121 and Ser-180. A Glycyl lysine isopeptide (Lys-Gly) (interchain with G-Cter in SUMO2) cross-link involves residue Lys-184.

It belongs to the UPF0461 family.

The polypeptide is UPF0461 protein C5orf24 homolog (Mus musculus (Mouse)).